Consider the following 1502-residue polypeptide: Nucleoporin NUP170 (1502 aa).

The segment at Met1–Glu31 is disordered. Residues Phe18–Gln30 are compositionally biased toward polar residues. The interval Leu233 to Leu261 is leucine-zipper. Ser1247 carries the post-translational modification Phosphoserine.

It belongs to the non-repetitive/WGA-negative nucleoporin family. As to quaternary structure, component of the nuclear pore complex (NPC). NPC constitutes the exclusive means of nucleocytoplasmic transport. NPCs allow the passive diffusion of ions and small molecules and the active, nuclear transport receptor-mediated bidirectional transport of macromolecules such as proteins, RNAs, ribonucleoparticles (RNPs), and ribosomal subunits across the nuclear envelope. Due to its 8-fold rotational symmetry, all subunits are present with 8 copies or multiples thereof. During mitosis NUP53 changes its binding partner within the NPC from NUP170 to NIC96, exposing a high affinity binding site for the karyopherin PSE1, and retaining it in the NPC.

Its subcellular location is the nucleus. The protein localises to the nuclear pore complex. The protein resides in the nucleus membrane. Functions as a component of the nuclear pore complex (NPC). NPC components, collectively referred to as nucleoporins (NUPs), can play the role of both NPC structural components and of docking or interaction partners for transiently associated nuclear transport factors. NUP170 probably plays an important role in NPC assembly and organization. In addition it is required for chromosome transmission fidelity. This Saccharomyces cerevisiae (strain ATCC 204508 / S288c) (Baker's yeast) protein is Nucleoporin NUP170 (NUP170).